The sequence spans 423 residues: Putative galacturan 1,4-alpha-galacturonidase C (423 aa).

The signal sequence occupies residues 1-20 (MRFSIISLVSLPLFLGLTYA). N-linked (GlcNAc...) asparagine glycans are attached at residues Asn100, Asn120, Asn150, Asn173, and Asn185. Asp229 (proton donor) is an active-site residue. Cys231 and Cys248 are oxidised to a cystine. N-linked (GlcNAc...) asparagine glycosylation is present at Asn245. The active site involves Asn252. Residues Asn344 and Asn362 are each glycosylated (N-linked (GlcNAc...) asparagine). Cys379 and Cys385 are joined by a disulfide. N-linked (GlcNAc...) asparagine glycosylation is present at Asn400. Cysteines 409 and 423 form a disulfide.

This sequence belongs to the glycosyl hydrolase 28 family.

The protein resides in the secreted. It catalyses the reaction [(1-&gt;4)-alpha-D-galacturonosyl](n) + H2O = alpha-D-galacturonate + [(1-&gt;4)-alpha-D-galacturonosyl](n-1). Specific in hydrolyzing the terminal glycosidic bond of polygalacturonic acid and oligogalacturonates. The chain is Putative galacturan 1,4-alpha-galacturonidase C (rgxC) from Neosartorya fischeri (strain ATCC 1020 / DSM 3700 / CBS 544.65 / FGSC A1164 / JCM 1740 / NRRL 181 / WB 181) (Aspergillus fischerianus).